The sequence spans 463 residues: A-type ATP synthase subunit B (463 aa).

Belongs to the ATPase alpha/beta chains family. Has multiple subunits with at least A(3), B(3), C, D, E, F, H, I and proteolipid K(x).

It localises to the cell membrane. In terms of biological role, component of the A-type ATP synthase that produces ATP from ADP in the presence of a proton gradient across the membrane. The B chain is a regulatory subunit. This is A-type ATP synthase subunit B from Methanothrix thermoacetophila (strain DSM 6194 / JCM 14653 / NBRC 101360 / PT) (Methanosaeta thermophila).